A 203-amino-acid chain; its full sequence is Glycerol-3-phosphate acyltransferase 1 (203 aa).

The next 6 membrane-spanning stretches (helical) occupy residues 2-22 (LNFF…SHII), 52-72 (GFPA…FFVW), 82-102 (VIAF…FLKF), 117-137 (VLTK…FSIL), 150-168 (EDAF…YTMW), and 170-190 (VFNG…IVFY).

This sequence belongs to the PlsY family. Probably interacts with PlsX.

The protein resides in the cell inner membrane. The enzyme catalyses an acyl phosphate + sn-glycerol 3-phosphate = a 1-acyl-sn-glycero-3-phosphate + phosphate. The protein operates within lipid metabolism; phospholipid metabolism. In terms of biological role, catalyzes the transfer of an acyl group from acyl-phosphate (acyl-PO(4)) to glycerol-3-phosphate (G3P) to form lysophosphatidic acid (LPA). This enzyme utilizes acyl-phosphate as fatty acyl donor, but not acyl-CoA or acyl-ACP. This Thermotoga maritima (strain ATCC 43589 / DSM 3109 / JCM 10099 / NBRC 100826 / MSB8) protein is Glycerol-3-phosphate acyltransferase 1.